The sequence spans 173 residues: Translation initiation factor IF-3 (173 aa).

The protein belongs to the IF-3 family. Monomer.

The protein resides in the cytoplasm. In terms of biological role, IF-3 binds to the 30S ribosomal subunit and shifts the equilibrium between 70S ribosomes and their 50S and 30S subunits in favor of the free subunits, thus enhancing the availability of 30S subunits on which protein synthesis initiation begins. The polypeptide is Translation initiation factor IF-3 (Enterococcus faecalis (strain ATCC 700802 / V583)).